A 293-amino-acid chain; its full sequence is Elongation factor Ts (293 aa).

Residues 79–82 form an involved in Mg(2+) ion dislocation from EF-Tu region; that stretch reads TDFV.

Belongs to the EF-Ts family.

Its subcellular location is the cytoplasm. In terms of biological role, associates with the EF-Tu.GDP complex and induces the exchange of GDP to GTP. It remains bound to the aminoacyl-tRNA.EF-Tu.GTP complex up to the GTP hydrolysis stage on the ribosome. The protein is Elongation factor Ts of Exiguobacterium sibiricum (strain DSM 17290 / CCUG 55495 / CIP 109462 / JCM 13490 / 255-15).